The primary structure comprises 381 residues: Estradiol 17-beta-dehydrogenase 2 (381 aa).

Residues 4 to 24 traverse the membrane as a helical; Signal-anchor for type II membrane protein segment; it reads FASESAWLCLAAAAVLGGTLL. An NAD(+)-binding site is contributed by 83-112; that stretch reads QKAVLVTGADSGFGHGLAKHLDKLGFTVFA. Ser220 lines the substrate pocket. Tyr233 acts as the Proton acceptor in catalysis.

The protein belongs to the short-chain dehydrogenases/reductases (SDR) family. As to quaternary structure, homodimer.

It localises to the endoplasmic reticulum membrane. It catalyses the reaction 17beta-estradiol + NAD(+) = estrone + NADH + H(+). The enzyme catalyses testosterone + NAD(+) = androst-4-ene-3,17-dione + NADH + H(+). It carries out the reaction 17beta-hydroxy-5alpha-androstan-3-one + NAD(+) = 5alpha-androstan-3,17-dione + NADH + H(+). The catalysed reaction is (20S)-hydroxypregn-4-en-3-one + NAD(+) = progesterone + NADH + H(+). In terms of biological role, catalyzes the NAD-dependent oxidation of highly active 17beta-hydroxysteroids, such as estradiol (E2), testosterone (T), and dihydrotestosterone (DHT), to their less active forms and thus regulates the biological potency of these steroids. Oxidizes estradiol to estrone, testosterone to androstenedione, and dihydrotestosterone to 5alpha-androstan-3,17-dione. Also has 20-alpha-HSD activity. The chain is Estradiol 17-beta-dehydrogenase 2 (Hsd17b2) from Mus musculus (Mouse).